A 265-amino-acid chain; its full sequence is Phosphatidylserine decarboxylase proenzyme (265 aa).

S183 functions as the Schiff-base intermediate with substrate; via pyruvic acid in the catalytic mechanism. Residue S183 is modified to Pyruvic acid (Ser); by autocatalysis. Residues 216 to 246 (TAPQTESEPESEPALQTAPVETAANPSAEQR) form a disordered region.

The protein belongs to the phosphatidylserine decarboxylase family. PSD-A subfamily. In terms of assembly, heterodimer of a large membrane-associated beta subunit and a small pyruvoyl-containing alpha subunit. Pyruvate is required as a cofactor. In terms of processing, is synthesized initially as an inactive proenzyme. Formation of the active enzyme involves a self-maturation process in which the active site pyruvoyl group is generated from an internal serine residue via an autocatalytic post-translational modification. Two non-identical subunits are generated from the proenzyme in this reaction, and the pyruvate is formed at the N-terminus of the alpha chain, which is derived from the carboxyl end of the proenzyme. The post-translation cleavage follows an unusual pathway, termed non-hydrolytic serinolysis, in which the side chain hydroxyl group of the serine supplies its oxygen atom to form the C-terminus of the beta chain, while the remainder of the serine residue undergoes an oxidative deamination to produce ammonia and the pyruvoyl prosthetic group on the alpha chain.

It localises to the cell membrane. The catalysed reaction is a 1,2-diacyl-sn-glycero-3-phospho-L-serine + H(+) = a 1,2-diacyl-sn-glycero-3-phosphoethanolamine + CO2. Its pathway is phospholipid metabolism; phosphatidylethanolamine biosynthesis; phosphatidylethanolamine from CDP-diacylglycerol: step 2/2. In terms of biological role, catalyzes the formation of phosphatidylethanolamine (PtdEtn) from phosphatidylserine (PtdSer). The chain is Phosphatidylserine decarboxylase proenzyme from Neisseria meningitidis serogroup B (strain ATCC BAA-335 / MC58).